A 382-amino-acid polypeptide reads, in one-letter code: Galactokinase (382 aa).

34-37 contacts substrate; the sequence is EHTD. 124–130 provides a ligand contact to ATP; sequence GAGLSSS. 2 residues coordinate Mg(2+): serine 130 and glutamate 162. Aspartate 174 acts as the Proton acceptor in catalysis. Tyrosine 223 is a substrate binding site.

Belongs to the GHMP kinase family. GalK subfamily.

It localises to the cytoplasm. The catalysed reaction is alpha-D-galactose + ATP = alpha-D-galactose 1-phosphate + ADP + H(+). Its pathway is carbohydrate metabolism; galactose metabolism. Catalyzes the transfer of the gamma-phosphate of ATP to D-galactose to form alpha-D-galactose-1-phosphate (Gal-1-P). The protein is Galactokinase of Salmonella paratyphi A (strain ATCC 9150 / SARB42).